An 80-amino-acid polypeptide reads, in one-letter code: Acyl carrier protein (80 aa).

Residues 4-79 (EDIFSKVKDI…DAVDFIASKA (76 aa)) form the Carrier domain. Serine 39 bears the O-(pantetheine 4'-phosphoryl)serine mark.

Belongs to the acyl carrier protein (ACP) family. 4'-phosphopantetheine is transferred from CoA to a specific serine of apo-ACP by AcpS. This modification is essential for activity because fatty acids are bound in thioester linkage to the sulfhydryl of the prosthetic group.

It localises to the cytoplasm. The protein operates within lipid metabolism; fatty acid biosynthesis. Its function is as follows. Carrier of the growing fatty acid chain in fatty acid biosynthesis. This is Acyl carrier protein from Synechococcus elongatus (strain ATCC 33912 / PCC 7942 / FACHB-805) (Anacystis nidulans R2).